The following is a 76-amino-acid chain: Dolichyl-diphosphooligosaccharide--protein glycosyltransferase subunit OST5 (76 aa).

2 helical membrane passes run 14-34 (FYPV…ATFI) and 54-74 (ALIA…AGGI).

Belongs to the OST5 family. As to quaternary structure, component of the oligosaccharyltransferase (OST) complex.

It localises to the membrane. In terms of biological role, subunit of the oligosaccharyl transferase (OST) complex that catalyzes the initial transfer of a defined glycan (Glc(3)Man(9)GlcNAc(2) in eukaryotes) from the lipid carrier dolichol-pyrophosphate to an asparagine residue within an Asn-X-Ser/Thr consensus motif in nascent polypeptide chains, the first step in protein N-glycosylation. N-glycosylation occurs cotranslationally and the complex associates with the Sec61 complex at the channel-forming translocon complex that mediates protein translocation across the endoplasmic reticulum (ER). All subunits are required for a maximal enzyme activity. The protein is Dolichyl-diphosphooligosaccharide--protein glycosyltransferase subunit OST5 of Dictyostelium discoideum (Social amoeba).